A 344-amino-acid chain; its full sequence is MVFSFQDDTALTVALNSIKLVKNPEELIPGLIPTNPKTGIFYIAAEITNSNNFFKWGTDSNREIIKGQMYFLKKETKIPTIRTYLFQMRTHKIALNANDVWFQANNDKVKVIVDGIELDQFDPKLPNVAFFNDYQVDLVSTLTLADKQLLIRRLNLALVGMNLMVDEQATNIETFPKQIRLTTKSIDQSFDFDVEFNPKASELNVIVKVDEQPLFKLDYELVIKNSNTLQLVNRNKHLGMYIWSVADQRYQAKLLDTLQLFLQSKQMYLKEKIPLKLQDNTATFKIAKQAQPNNGENKNTNFIGYLVIAASSLFLVVVAFSFYFYKRKKNLKSHKQKAVVKTDK.

The protein belongs to the MG414/MG415 family.

This is an uncharacterized protein from Mycoplasma pneumoniae (strain ATCC 29342 / M129 / Subtype 1) (Mycoplasmoides pneumoniae).